Consider the following 158-residue polypeptide: Large ribosomal subunit protein uL11 (158 aa).

The tract at residues 1–21 (MAQSVKTMVEGGKATTGPPIG) is disordered.

It belongs to the universal ribosomal protein uL11 family. As to quaternary structure, part of the ribosomal stalk of the 50S ribosomal subunit. Interacts with L10 and the large rRNA to form the base of the stalk. L10 forms an elongated spine to which L12 dimers bind in a sequential fashion forming a multimeric L10(L12)X complex.

Forms part of the ribosomal stalk which helps the ribosome interact with GTP-bound translation factors. The chain is Large ribosomal subunit protein uL11 from Thermoplasma volcanium (strain ATCC 51530 / DSM 4299 / JCM 9571 / NBRC 15438 / GSS1).